The chain runs to 58 residues: VAIAENSVVGGTCVIRGCVPKLTLTGDDTEPLIVDALLCATGRTTQSNIFAVGDCTDR.

Residues E5, T12, C13, and K21 each contribute to the FAD site. A disulfide bond links C13 and C18.

The protein belongs to the class-I pyridine nucleotide-disulfide oxidoreductase family. In terms of assembly, homodimer. The cofactor is FAD.

The protein localises to the cytoplasm. The catalysed reaction is 2 glutathione + NADP(+) = glutathione disulfide + NADPH + H(+). Functionally, catalyzes the reduction of glutathione disulfide (GSSG) to reduced glutathione (GSH). Constitutes the major mechanism to maintain a high GSH:GSSG ratio in the cytosol. The chain is Glutathione reductase from Spirulina sp.